The chain runs to 62 residues: Alpha-elapitoxin-Pc1 (62 aa).

Cystine bridges form between Cys3-Cys24, Cys17-Cys41, Cys43-Cys54, and Cys55-Cys60.

It belongs to the three-finger toxin family. Short-chain subfamily. Type I alpha-neurotoxin sub-subfamily. As to expression, expressed by the venom gland.

It is found in the secreted. Its function is as follows. Bird-specific neurotoxin (tested on chicken) that acts as pseudo-irreversible antagonists at the nicotinic acetylcholine receptor (nAChR) of the skeletal neuromuscular junction. Has no significant effect on the electrically-induced twitches of the rat isolated phrenic nerve-diaphragm preparation. The polypeptide is Alpha-elapitoxin-Pc1 (Pseudechis colletti (Collett's snake)).